We begin with the raw amino-acid sequence, 176 residues long: Ferredoxin-type protein NapF (176 aa).

4Fe-4S ferredoxin-type domains lie at 39 to 68 (VENSIFVARCTRCGDCLSVCETNILVKGDA) and 71 to 100 (PEVRFDNGECTFCGKCVDACKQPIFYPRDQ). [4Fe-4S] cluster contacts are provided by C48, C51, C54, C58, C80, C83, C86, C90, C113, C121, C124, C128, C152, C155, C158, and C162. 4Fe-4S ferredoxin-type domains lie at 119–138 (IECRTCQDNCPANAIRFKLQ) and 143–172 (AQPLVNFDACNGCGACVQGCPVNAITMNDL).

Belongs to the NapF family. In terms of assembly, interacts with the cytoplasmic NapA precursor. Requires [4Fe-4S] cluster as cofactor.

The protein resides in the cytoplasm. Could be involved in the maturation of NapA, the catalytic subunit of the periplasmic nitrate reductase, before its export into the periplasm. This is Ferredoxin-type protein NapF from Haemophilus influenzae (strain ATCC 51907 / DSM 11121 / KW20 / Rd).